A 330-amino-acid chain; its full sequence is PDZ and LIM domain protein 4 (330 aa).

The PDZ domain maps to 1–84; sequence MTHSVTLRGP…HLTLSVSRPE (84 aa). 2 disordered regions span residues 104 to 153 and 219 to 242; these read DPES…SNEA and EAGE…ASKL. Phosphoserine occurs at positions 107, 111, 115, 118, 119, 124, and 134. Polar residues predominate over residues 108–122; sequence QDCSPATSRRSSVSG. Positions 255–305 constitute an LIM zinc-binding domain; sequence CTRCGHGIVGTIVKARDKLYHPECFMCSDCGLNLKQRGYFFLDERLYCENH.

In terms of assembly, homodimer. Interacts (via C-terminus only or via combined C-terminus and LIM domain, but not LIM domain only) with PTPN13 (via the second or fourth PDZ domains). Found in a complex with PTPN13 and TRIP6. Interacts (via PDZ domain) with ACTN1 and ACTN2 (via C-terminal SDL residues). Interacts (via PDZ domain) with TRIP6 (via the second LIM domain or via the third LIM domain plus C-terminus). Interacts (via LIM domain) with GRIA1 (via C-terminus); this interaction as well as the interaction with alpha-actinin is required for their colocalization in early endosomes. Interacts with PDLIM1. Forms (via LIM domain) a heterodimer with PDLIM3. Interacts directly with SRC (via kinase domain and to a lesser extent the SH2 domain). In terms of processing, phosphorylated on tyrosine residue(s). Can be dephosphorylated by PTPN13. In terms of tissue distribution, expressed in several non-muscle tissues including lung, brain, ovary and uterus, and especially in epithelial cells at 14 dpc. In the uterus, high expression in the glandular epithelium, but absent in the simple columnar epithelium lining the uterus cavity.

The protein resides in the cytoplasm. It localises to the cytoskeleton. The protein localises to the cell projection. Its subcellular location is the dendritic spine. It is found in the early endosome membrane. The protein resides in the recycling endosome membrane. It localises to the nucleus. The protein localises to the perinuclear region. Its subcellular location is the lamellipodium. It is found in the synapse. The protein resides in the synaptosome. Suppresses SRC activation by recognizing and binding to active SRC and facilitating PTPN13-mediated dephosphorylation of SRC 'Tyr-419' leading to its inactivation. Inactivated SRC dissociates from this protein allowing the initiation of a new SRC inactivation cycle. Involved in reorganization of the actin cytoskeleton. In nonmuscle cells, binds to ACTN1 (alpha-actinin-1), increases the affinity of ACTN1 to F-actin (filamentous actin), and promotes formation of actin stress fibers. Involved in regulation of the synaptic AMPA receptor transport in dendritic spines of hippocampal pyramidal neurons directing the receptors toward an insertion at the postsynaptic membrane. Links endosomal surface-internalized GRIA1-containing AMPA receptors to the alpha-actinin/actin cytoskeleton. Increases AMPA receptor-mediated excitatory postsynaptic currents in neurons. This Mus musculus (Mouse) protein is PDZ and LIM domain protein 4 (Pdlim4).